We begin with the raw amino-acid sequence, 326 residues long: Adenosine receptor A1 (326 aa).

Residues M1 to A10 are Extracellular-facing. Residues A11–A33 traverse the membrane as a helical segment. Over V34–C46 the chain is Cytoplasmic. The chain crosses the membrane as a helical span at residues F47–I69. Topologically, residues N70–C80 are extracellular. A disulfide bridge connects residues C80 and C169. Residues L81–A102 form a helical membrane-spanning segment. Over V103–R123 the chain is Cytoplasmic. The chain crosses the membrane as a helical span at residues A124–W146. The Extracellular portion of the chain corresponds to N147–S176. N148 and N159 each carry an N-linked (GlcNAc...) asparagine glycan. A helical membrane pass occupies residues M177–L201. The Cytoplasmic segment spans residues E202 to S235. The helical transmembrane segment at L236–F259 threads the bilayer. Residues C260–S267 lie on the Extracellular side of the membrane. Residues I268–I292 form a helical membrane-spanning segment. Residues H293–D326 lie on the Cytoplasmic side of the membrane. C309 carries the S-palmitoyl cysteine lipid modification.

This sequence belongs to the G-protein coupled receptor 1 family.

The protein resides in the cell membrane. Its function is as follows. Receptor for adenosine. The activity of this receptor is mediated by G proteins which inhibit adenylyl cyclase. The protein is Adenosine receptor A1 (Adora1) of Mus musculus (Mouse).